The sequence spans 1218 residues: Protein STICHEL (1218 aa).

The segment at 24–136 (AGRVLRDPGT…SDARNGGDSY (113 aa)) is disordered. Polar residues-rich tracts occupy residues 32-46 (GTTS…SSRS), 54-73 (ASRN…SSTN), and 86-95 (WKTQKSSSEK). A Bipartite nuclear localization signal motif is present at residues 163–180 (RKSNVGSCKKKSKKKISS). 2 short sequence motifs (PEST) span residues 273–304 (RNPS…LPGR) and 425–449 (RSQD…ETIR). 490–497 (GPRGTGKT) contacts ATP. Zn(2+) is bound by residues C509, C518, C521, and C524. Residues 762–788 (EADMEGLKHALKLLSEAEKQLRVSNDR) are a coiled coil. The interval 802 to 828 (MPSPGTTHTGSSRRQSSRATDDDPASV) is disordered. The span at 804–819 (SPGTTHTGSSRRQSSR) shows a compositional bias: polar residues. Short sequence motifs (bipartite nuclear localization signal) lie at residues 1178–1195 (RRSK…SRRN) and 1196–1213 (RKSR…RKAE).

The protein belongs to the DnaX/STICHEL family. Interacts with BLT. In terms of tissue distribution, ubiquitous.

The protein localises to the nucleus. In terms of biological role, acts as a key regulator of trichome branching through an endoreduplication-independent pathway. The polypeptide is Protein STICHEL (STI) (Arabidopsis thaliana (Mouse-ear cress)).